Here is an 859-residue protein sequence, read N- to C-terminus: Leucine--tRNA ligase (859 aa).

Positions 42–52 (PYPSGRLHMGH) match the 'HIGH' region motif. The short motif at 618–622 (KMSKS) is the 'KMSKS' region element. K621 lines the ATP pocket.

Belongs to the class-I aminoacyl-tRNA synthetase family.

The protein localises to the cytoplasm. It catalyses the reaction tRNA(Leu) + L-leucine + ATP = L-leucyl-tRNA(Leu) + AMP + diphosphate. The polypeptide is Leucine--tRNA ligase (Shewanella oneidensis (strain ATCC 700550 / JCM 31522 / CIP 106686 / LMG 19005 / NCIMB 14063 / MR-1)).